The chain runs to 371 residues: MVSFDRPVWAEIDLSAFRHNMRQIKSLLQPGTIFCPIIKADGYGHGAVPLAHEAVAMGAGYLGVAILDEAAALRAAGITLPILILGYTPPQAAAFVVSNHITQTIFSKEQADALSAAASNLGITVKVHVKVDTGMTRIGVRPEEAAAFCSYVAGLENVHLEGMFTHFASSDSADHAYCLEQFGRFTAAIAAVEASGIRLGIRHCANSAAILSLPEGHLDMVRAGIILYGLKPSDECPMPIDLRPVMRLKARLAMVKQVPPGVGVSYGSIYHTQKESSLATIPIGYADGYTRMLSRKAQVLLRGQRAPVVGRICMDQCMVDVSHVPQAAVGDEVLLFGGPDLPADEIAAHLGTINYEVVCMVGKRVPRVYVE.

Catalysis depends on Lys39, which acts as the Proton acceptor; specific for D-alanine. Position 39 is an N6-(pyridoxal phosphate)lysine (Lys39). A substrate-binding site is contributed by Arg137. Tyr266 (proton acceptor; specific for L-alanine) is an active-site residue. Met314 lines the substrate pocket.

It belongs to the alanine racemase family. The cofactor is pyridoxal 5'-phosphate.

The enzyme catalyses L-alanine = D-alanine. Its pathway is amino-acid biosynthesis; D-alanine biosynthesis; D-alanine from L-alanine: step 1/1. Its function is as follows. Catalyzes the interconversion of L-alanine and D-alanine. May also act on other amino acids. In Desulfovibrio desulfuricans (strain ATCC 27774 / DSM 6949 / MB), this protein is Alanine racemase (alr).